The chain runs to 451 residues: MSGEQKSYLENQLEAVAEKTDAGYTFTFQREKIKLLDGLEANVIKDINPFFHKEIDVTDDEVIITIQPPSSYKAFRFMKAKDKKSKWQFAYQLVQAVQQHNLSRLNLIVAPENIVFDKGLTPYFLHYGVKESIPPYERDEERVWQELKAAAALAVDGAFAFEDYLKFNETLTFSAEAKAILDAESYDDLLELIQTHIDELEAKAKTYIHIPRKKWNIQRYIGLGLIVLLVPALIYSMYALFFAQPKHQAIVDSNRAFLNKQYSEVISTLSKYDAESLPESVQYQLATSYVEVENLGSAKTKNIENNLVTLQSDPQHFLYWIDYGRGEYKEAISIGRKLEYNDYIYFALAKYKQQLLSEDTNDEDIQKELDSVNSELEKAQKERQENKQSNSETSLVDTSEEQTQTDEEKQAEEKAAEEKAAAEEKAKKEEQKEKEDEKKETEKKDEKKDDK.

The chain crosses the membrane as a helical span at residues 221 to 241 (IGLGLIVLLVPALIYSMYALF). Residues 362–447 (DEDIQKELDS…KKETEKKDEK (86 aa)) are a coiled coil. Over residues 376–386 (LEKAQKERQEN) the composition is skewed to basic and acidic residues. Positions 376 to 451 (LEKAQKERQE…EKKDEKKDDK (76 aa)) are disordered. The segment covering 387–397 (KQSNSETSLVD) has biased composition (polar residues). A compositionally biased stretch (basic and acidic residues) spans 406–451 (DEEKQAEEKAAEEKAAAEEKAKKEEQKEKEDEKKETEKKDEKKDDK).

Belongs to the EssB family.

The protein localises to the cell membrane. Required for YukE secretion. Probable component or regulator of the ESX/ESAT-6-like secretion system (BsEss). Required to deliver LXG toxins to target cells. This is ESX secretion system protein YukC (yukC) from Bacillus subtilis (strain 168).